The primary structure comprises 473 residues: Cucurbitadienol 11-hydroxylase (473 aa).

The helical transmembrane segment at 4-24 (VVLGLATLFVAYYIHWINKWR) threads the bilayer. Cysteine 422 contacts heme.

The protein belongs to the cytochrome P450 family. Heme serves as cofactor. Highly expressed in young fruits 15 days after anthesis (15-DAA). Also observed in roots.

It is found in the membrane. The catalysed reaction is cucurbitadienol + 2 reduced [NADPH--hemoprotein reductase] + 2 O2 = 11-oxocucurbitadienol + 2 oxidized [NADPH--hemoprotein reductase] + 3 H2O + 2 H(+). It carries out the reaction cucurbitadienol + reduced [NADPH--hemoprotein reductase] + O2 = 11-hydroxycucurbitadienol + oxidized [NADPH--hemoprotein reductase] + H2O + H(+). It catalyses the reaction 11-hydroxycucurbitadienol + reduced [NADPH--hemoprotein reductase] + O2 = 11-oxocucurbitadienol + oxidized [NADPH--hemoprotein reductase] + 2 H2O + H(+). The enzyme catalyses (24R)-24,25-dihydroxycucurbitadienol + reduced [NADPH--hemoprotein reductase] + O2 = mogrol + oxidized [NADPH--hemoprotein reductase] + H2O + H(+). It participates in secondary metabolite biosynthesis; terpenoid biosynthesis. In terms of biological role, hydroxylase involved in the biosynthesis of cucurbitacin and mogroside tetracyclic triterpene natural products (e.g. siamenoside I and mogrosides IV, V and VI). Cucurbitacins have cytotoxic properties and exhibit deterrent taste as a defense barrier against herbivores. Mogrosides are nonsugar highly oxygenated compounds used as high-intensity zero-calorie sweeteners; they also possess pharmacological properties such as regulating immunity, lowering blood sugar and lipid levels, protecting the liver, and acting as antioxidants and antitumor agents. Catalyzes the oxidation of cucurbitadienol at the C-11 position to produce 11-oxocucurbitadienol, a possible biosynthetic intermediate from cucurbitadienol to mogrol. Also mediates the conversion of 24,25-dihydroxycucurbitadienol to mogrol. This chain is Cucurbitadienol 11-hydroxylase, found in Siraitia grosvenorii (Monk's fruit).